A 287-amino-acid polypeptide reads, in one-letter code: Shikimate dehydrogenase (NADP(+)) (287 aa).

Shikimate-binding positions include 20–22 (SRS) and Thr-67. The active-site Proton acceptor is the Lys-71. Residue Glu-84 participates in NADP(+) binding. Residues Asn-93 and Asp-108 each contribute to the shikimate site. Residues 132–136 (GAGGA), 156–161 (NRTAAR), and Met-226 contribute to the NADP(+) site. Tyr-228 contributes to the shikimate binding site. NADP(+) is bound at residue Gly-250.

Belongs to the shikimate dehydrogenase family. In terms of assembly, homodimer.

It carries out the reaction shikimate + NADP(+) = 3-dehydroshikimate + NADPH + H(+). Its pathway is metabolic intermediate biosynthesis; chorismate biosynthesis; chorismate from D-erythrose 4-phosphate and phosphoenolpyruvate: step 4/7. Its function is as follows. Involved in the biosynthesis of the chorismate, which leads to the biosynthesis of aromatic amino acids. Catalyzes the reversible NADPH linked reduction of 3-dehydroshikimate (DHSA) to yield shikimate (SA). The chain is Shikimate dehydrogenase (NADP(+)) from Bordetella bronchiseptica (strain ATCC BAA-588 / NCTC 13252 / RB50) (Alcaligenes bronchisepticus).